Here is a 329-residue protein sequence, read N- to C-terminus: Flotillin-like protein FloA (329 aa).

Residues 4–24 (IWGFLILILVLIFLGVFFSFV) traverse the membrane as a helical segment.

Belongs to the flotillin-like FloA family. Homooligomerizes.

It is found in the cell membrane. The protein localises to the membrane raft. In terms of biological role, found in functional membrane microdomains (FMM) that may be equivalent to eukaryotic membrane rafts. FMMs are highly dynamic and increase in number as cells age. Flotillins are thought to be important factors in membrane fluidity. The sequence is that of Flotillin-like protein FloA from Dictyoglomus turgidum (strain DSM 6724 / Z-1310).